Here is a 775-residue protein sequence, read N- to C-terminus: Transposon TX1 uncharacterized 82 kDa protein (775 aa).

A compositionally biased stretch (basic and acidic residues) spans 1–10; the sequence is MGGNKKESYK. Disordered stretches follow at residues 1–46, 256–277, and 535–565; these read MGGN…ASTS, PKGQ…KTSY, and PIQD…TSTV. The span at 35–46 shows a compositional bias: polar residues; it reads EPMSKSPIASTS. Residues 539–549 are compositionally biased toward basic and acidic residues; the sequence is PADKTAGKDGE.

This is Transposon TX1 uncharacterized 82 kDa protein from Xenopus laevis (African clawed frog).